We begin with the raw amino-acid sequence, 132 residues long: Small ribosomal subunit protein uS8 (132 aa).

The protein belongs to the universal ribosomal protein uS8 family. In terms of assembly, part of the 30S ribosomal subunit. Contacts proteins S5 and S12.

One of the primary rRNA binding proteins, it binds directly to 16S rRNA central domain where it helps coordinate assembly of the platform of the 30S subunit. The polypeptide is Small ribosomal subunit protein uS8 (Allorhizobium ampelinum (strain ATCC BAA-846 / DSM 112012 / S4) (Agrobacterium vitis (strain S4))).